A 208-amino-acid chain; its full sequence is Large ribosomal subunit protein uL4 (208 aa).

The interval 58–77 (RGGGRKPWRQKGTGRARQGS) is disordered. Positions 60–71 (GGRKPWRQKGTG) are enriched in basic residues.

Belongs to the universal ribosomal protein uL4 family. As to quaternary structure, part of the 50S ribosomal subunit.

Its function is as follows. One of the primary rRNA binding proteins, this protein initially binds near the 5'-end of the 23S rRNA. It is important during the early stages of 50S assembly. It makes multiple contacts with different domains of the 23S rRNA in the assembled 50S subunit and ribosome. Forms part of the polypeptide exit tunnel. This is Large ribosomal subunit protein uL4 from Caldicellulosiruptor saccharolyticus (strain ATCC 43494 / DSM 8903 / Tp8T 6331).